A 132-amino-acid polypeptide reads, in one-letter code: D-ribose pyranase (132 aa).

His-20 acts as the Proton donor in catalysis. Residues Asp-28, His-99, and 121–123 (YSN) each bind substrate.

It belongs to the RbsD / FucU family. RbsD subfamily. In terms of assembly, homodecamer.

The protein resides in the cytoplasm. It catalyses the reaction beta-D-ribopyranose = beta-D-ribofuranose. It participates in carbohydrate metabolism; D-ribose degradation; D-ribose 5-phosphate from beta-D-ribopyranose: step 1/2. Functionally, catalyzes the interconversion of beta-pyran and beta-furan forms of D-ribose. The polypeptide is D-ribose pyranase (Lactococcus lactis subsp. cremoris (strain SK11)).